The following is a 451-amino-acid chain: Secreted RxLR effector protein 70 (451 aa).

Positions 1-17 (MRGAYYIITALLVVASS) are cleaved as a signal peptide. Residues 48–65 (RFLRESRDVHDDLANEER) carry the RxLR-dEER motif. Residues 303 to 336 (DAPSNSKHTLGGNKDSSSATTLHKHSKGLSSRPF) form a disordered region. The segment covering 305–323 (PSNSKHTLGGNKDSSSATT) has biased composition (polar residues).

This sequence belongs to the RxLR effector family.

The protein localises to the secreted. Its subcellular location is the host nucleus. Secreted effector that completely suppresses the host cell death induced by cell death-inducing proteins. The polypeptide is Secreted RxLR effector protein 70 (Plasmopara viticola (Downy mildew of grapevine)).